The primary structure comprises 576 residues: V-type ATP synthase alpha chain (576 aa).

Position 238 to 245 (238 to 245 (GPFGAGKT)) interacts with ATP.

It belongs to the ATPase alpha/beta chains family.

It carries out the reaction ATP + H2O + 4 H(+)(in) = ADP + phosphate + 5 H(+)(out). In terms of biological role, produces ATP from ADP in the presence of a proton gradient across the membrane. The V-type alpha chain is a catalytic subunit. The protein is V-type ATP synthase alpha chain of Borrelia recurrentis (strain A1).